A 101-amino-acid polypeptide reads, in one-letter code: MTQQQDELDQIKSQIQEHLISSGNYDIINKQLKLQLYESGWFDKVTQLANRELQENSAHDTAVSFDQLFSFVKPKAEEMVPSNIKEDVLERLKDYLDDVIQ.

The protein belongs to the ENY2 family. Component of the nuclear pore complex (NPC)-associated TREX-2 complex (transcription and export complex 2), composed of at least SUS1, SAC3, THP1, SEM1, and CDC31. TREX-2 contains 2 SUS1 chains. The TREX-2 complex interacts with the nucleoporin NUP1. Component of the 1.8 MDa SAGA transcription coactivator-HAT complex. SAGA is built of 5 distinct domains with specialized functions. Within the SAGA complex, SUS1, SGF11, SGF73 and UBP8 form an additional subcomplex of SAGA called the DUB module (deubiquitination module). Interacts directly with THP1, SAC3, SGF11, and with the RNA polymerase II.

The protein localises to the nucleus. Its subcellular location is the nucleoplasm. It localises to the cytoplasm. The protein resides in the P-body. In terms of biological role, involved in mRNA export coupled transcription activation by association with both the TREX-2 and the SAGA complexes. At the promoters, SAGA is required for recruitment of the basal transcription machinery. It influences RNA polymerase II transcriptional activity through different activities such as TBP interaction and promoter selectivity, interaction with transcription activators, and chromatin modification through histone acetylation and deubiquitination. Within the SAGA complex, participates in a subcomplex required for deubiquitination of H2B and for the maintenance of steady-state H3 methylation levels. The TREX-2 complex functions in docking export-competent ribonucleoprotein particles (mRNPs) to the nuclear entrance of the nuclear pore complex (nuclear basket). TREX-2 participates in mRNA export and accurate chromatin positioning in the nucleus by tethering genes to the nuclear periphery. May also be involved in cytoplasmic mRNA decay by interaction with components of P-bodies. This chain is Transcription and mRNA export factor SUS1, found in Debaryomyces hansenii (strain ATCC 36239 / CBS 767 / BCRC 21394 / JCM 1990 / NBRC 0083 / IGC 2968) (Yeast).